We begin with the raw amino-acid sequence, 1180 residues long: RecBCD enzyme subunit RecB (1180 aa).

The UvrD-like helicase ATP-binding domain maps to 2 to 450 (SDVAETLDPL…YTLDTNWRSA (449 aa)). An ATPase, DNA-binding and helicase activity, interacts with RecC region spans residues 2-853 (SDVAETLDPL…KGEPQDAAGL (852 aa)). 23–30 (ASAGTGKT) is an ATP binding site. Residues 252–254 (IDR) mediate DNA binding. Trp447 is an ATP binding site. The 267-residue stretch at 480–746 (SAGKNQALRF…QIVTIHKSKG (267 aa)) folds into the UvrD-like helicase C-terminal domain. 3 consecutive DNA-binding regions follow at residues 511–512 (VG), 560–561 (SR), and Arg761. Positions 900–1180 (NWRVTSYSGL…MFAGMTLEEA (281 aa)) are nuclease activity, interacts with RecD and RecA. 4 residues coordinate Mg(2+): His956, Asp1067, Asp1080, and Tyr1081. The active-site For nuclease activity is the Asp1080.

It belongs to the helicase family. UvrD subfamily. As to quaternary structure, heterotrimer of RecB, RecC and RecD. All subunits contribute to DNA-binding. The C-terminus interacts with RecA. Interacts with YgbT (Cas1). In terms of assembly, (Microbial infection) Lambda virus GamS protein interacts with the enzyme without displacing any of the subunits. The cofactor is Mg(2+).

The catalysed reaction is Exonucleolytic cleavage (in the presence of ATP) in either 5'- to 3'- or 3'- to 5'-direction to yield 5'-phosphooligonucleotides.. The enzyme catalyses Couples ATP hydrolysis with the unwinding of duplex DNA by translocating in the 3'-5' direction.. It carries out the reaction ATP + H2O = ADP + phosphate + H(+). With respect to regulation, after reacting with DNA bearing a Chi site the holoenzyme is disassembled and loses exonuclease activity, DNA unwinding and Chi-directed DNA cleavage; RecB remains complexed with ssDNA, which may prevent holoenzyme reassembly. High levels of Mg(2+) (13 mM MgCl(2+)) or incubation with DNase allows holoenzyme reassembly, suggesting it is DNA bound to RecB that prevents reassembly. Its activity is regulated as follows. (Microbial infection) RecBCD is inhibited by the lambda virus gam protein (both GamL and GamS isoforms); in vitro a short preincubation prior to adding DNA results in maximal inhibition. A helicase/nuclease that prepares dsDNA breaks (DSB) for recombinational DNA repair. Binds to DSBs and unwinds DNA via a rapid (&gt;1 kb/second) and highly processive (&gt;30 kb) ATP-dependent bidirectional helicase. Unwinds dsDNA until it encounters a Chi (crossover hotspot instigator, 5'-GCTGGTGG-3') sequence from the 3' direction. Cuts ssDNA a few nucleotides 3' to Chi site, by nicking one strand or switching the strand degraded (depending on the reaction conditions). The properties and activities of the enzyme are changed at Chi. The Chi-altered holoenzyme produces a long 3'-ssDNA overhang which facilitates RecA-binding to the ssDNA for homologous DNA recombination and repair. Holoenzyme degrades any linearized DNA that is unable to undergo homologous recombination. In the holoenzyme this subunit contributes ATPase, 3'-5' helicase, exonuclease activity and loads RecA onto ssDNA. The RecBC complex requires the RecD subunit for nuclease activity, but can translocate along ssDNA in both directions. The RecBCD complex does not unwind G-quadruplex DNA. Probably interacts with a component of retron Ec48 which moniters RecBCD stability; when RecB is missing or impaired the retron is activated and becomes toxic. This Escherichia coli (strain K12) protein is RecBCD enzyme subunit RecB.